We begin with the raw amino-acid sequence, 286 residues long: GTP cyclohydrolase 1 type 2 homolog (286 aa).

5 residues coordinate a divalent metal cation: histidine 66, histidine 67, aspartate 103, histidine 254, and glutamate 258.

It belongs to the GTP cyclohydrolase I type 2/NIF3 family. As to quaternary structure, homohexamer.

The polypeptide is GTP cyclohydrolase 1 type 2 homolog (Treponema pallidum (strain Nichols)).